The primary structure comprises 773 residues: 3-isopropylmalate dehydratase (773 aa).

[4Fe-4S] cluster is bound by residues Cys-355, Cys-415, and Cys-418.

This sequence belongs to the aconitase/IPM isomerase family. Monomer. It depends on [4Fe-4S] cluster as a cofactor.

The catalysed reaction is (2R,3S)-3-isopropylmalate = (2S)-2-isopropylmalate. The protein operates within amino-acid biosynthesis; L-leucine biosynthesis; L-leucine from 3-methyl-2-oxobutanoate: step 2/4. Functionally, catalyzes the isomerization between 2-isopropylmalate and 3-isopropylmalate, via the formation of 2-isopropylmaleate. This Mycosarcoma maydis (Corn smut fungus) protein is 3-isopropylmalate dehydratase (LEU1).